We begin with the raw amino-acid sequence, 264 residues long: MNSNYVPLTSSVDVEEKMESENGVDLGNDIDLEKGLPLKYNSENESGLPSNSASSYLINPDPTMDLEAQTFNHNESTTSVGHDNSNSPPKCRKTCSSNKVYSNEVPLLFVFVISISIVCIFDLVIFGCLQYNMVSMDDLHVMQRLSWFCASLALLFILMRYYDFWTKACKDGIKHIFKKWKNTPLAFLQVLIFNIIGFFVRKGLKDSFGEQWGLKTSLFAHVSFATMSIFIFIFETLKPGSCSVDWIARILKAVVYFLEDSDEL.

Positions 1-12 (MNSNYVPLTSSV) are enriched in polar residues. Residues 1 to 26 (MNSNYVPLTSSVDVEEKMESENGVDL) are disordered. 4 helical membrane-spanning segments follow: residues 107–127 (LLFV…VIFG), 145–165 (LSWF…YDFW), 180–200 (WKNT…GFFV), and 217–237 (SLFA…FETL).

The protein belongs to the WTF family.

It localises to the membrane. In terms of biological role, may act in meiotic drive. This Schizosaccharomyces pombe (strain 972 / ATCC 24843) (Fission yeast) protein is Wtf element wtf11.